Reading from the N-terminus, the 247-residue chain is Peptidyl-prolyl cis-trans isomerase FKBP17-2, chloroplastic (247 aa).

The N-terminal 79 residues, methionine 1–glycine 79, are a transit peptide targeting the chloroplast. A disordered region spans residues glutamine 26–threonine 64. Over residues proline 34–proline 51 the composition is skewed to pro residues. The PPIase FKBP-type domain maps to glycine 141–serine 243.

It belongs to the FKBP-type PPIase family.

Its subcellular location is the plastid. The protein resides in the chloroplast thylakoid lumen. It carries out the reaction [protein]-peptidylproline (omega=180) = [protein]-peptidylproline (omega=0). In terms of biological role, PPIases accelerate the folding of proteins. It catalyzes the cis-trans isomerization of proline imidic peptide bonds in oligopeptides. The polypeptide is Peptidyl-prolyl cis-trans isomerase FKBP17-2, chloroplastic (FKBP17-2) (Arabidopsis thaliana (Mouse-ear cress)).